Here is a 607-residue protein sequence, read N- to C-terminus: DNA mismatch repair protein MutL (607 aa).

This sequence belongs to the DNA mismatch repair MutL/HexB family.

Its function is as follows. This protein is involved in the repair of mismatches in DNA. It is required for dam-dependent methyl-directed DNA mismatch repair. May act as a 'molecular matchmaker', a protein that promotes the formation of a stable complex between two or more DNA-binding proteins in an ATP-dependent manner without itself being part of a final effector complex. This chain is DNA mismatch repair protein MutL, found in Anaeromyxobacter dehalogenans (strain 2CP-1 / ATCC BAA-258).